The primary structure comprises 478 residues: Lipoprotein lipase (478 aa).

A signal peptide spans Met-1 to Ala-28. The tract at residues Lys-35–Thr-56 is interaction with GPIHBP1. Cys-57 and Cys-70 form a disulfide bridge. N-linked (GlcNAc...) asparagine glycosylation occurs at Asn-73. Tyr-124 is modified (3'-nitrotyrosine). Catalysis depends on Ser-162, which acts as the Nucleophile. Asp-186 functions as the Charge relay system in the catalytic mechanism. Tyr-194 is modified (3'-nitrotyrosine). 4 residues coordinate Ca(2+): Ala-197, Arg-200, Ser-202, and Asp-205. The cysteines at positions 246 and 269 are disulfide-linked. Residues Cys-246–Cys-269 are essential for determining substrate specificity. His-271 acts as the Charge relay system in catalysis. N-linked (GlcNAc...) asparagine glycosylation occurs at Asn-287. 2 disulfide bridges follow: Cys-294-Cys-313 and Cys-305-Cys-308. The region spanning Phe-344–Lys-467 is the PLAT domain. The residue at position 346 (Tyr-346) is a 3'-nitrotyrosine. An N-linked (GlcNAc...) asparagine glycan is attached at Asn-389. The interval Trp-420–Trp-424 is important for interaction with lipoprotein particles. An important for heparin binding region spans residues Lys-433–Lys-437. An interaction with GPIHBP1 region spans residues Ile-446–Asp-470. Cysteines 448 and 468 form a disulfide.

Belongs to the AB hydrolase superfamily. Lipase family. In terms of assembly, homodimer. Interacts with GPIHBP1 with 1:1 stoichiometry. Interacts with APOC2; the interaction activates LPL activity in the presence of lipids. Interaction with heparan sulfate proteoglycans is required to protect LPL against loss of activity. Associates with lipoprotein particles in blood plasma. Interacts with LMF1 and SEL1L; interaction with SEL1L is required to prevent aggregation of newly synthesized LPL in the endoplasmic reticulum (ER), and for normal export of LPL from the ER to the extracellular space. Interacts with SORL1; SORL1 acts as a sorting receptor, promoting LPL localization to endosomes and later to lysosomes, leading to degradation of newly synthesized LPL. In terms of processing, tyrosine nitration after lipopolysaccharide (LPS) challenge down-regulates the lipase activity. In terms of tissue distribution, detected in milk (at protein level).

It is found in the cell membrane. It localises to the secreted. The protein localises to the extracellular space. Its subcellular location is the extracellular matrix. It carries out the reaction a triacylglycerol + H2O = a diacylglycerol + a fatty acid + H(+). It catalyses the reaction a 1,2-diacyl-sn-glycero-3-phosphocholine + H2O = a 2-acyl-sn-glycero-3-phosphocholine + a fatty acid + H(+). The catalysed reaction is 1,2,3-tri-(9Z-octadecenoyl)-glycerol + H2O = di-(9Z)-octadecenoylglycerol + (9Z)-octadecenoate + H(+). The enzyme catalyses 1,2-di-(9Z-octadecenoyl)-sn-glycero-3-phosphocholine + H2O = (9Z-octadecenoyl)-sn-glycero-3-phosphocholine + (9Z)-octadecenoate + H(+). It carries out the reaction 1,2,3-tributanoylglycerol + H2O = dibutanoylglycerol + butanoate + H(+). It catalyses the reaction 1,2-dihexadecanoyl-sn-glycero-3-phosphocholine + H2O = hexadecanoyl-sn-glycero-3-phosphocholine + hexadecanoate + H(+). The apolipoprotein APOC2 acts as a coactivator of LPL activity. Ca(2+) binding promotes protein stability and formation of the active homodimer. Interaction with GPIHBP1 protects LPL against inactivation by ANGPTL4. In terms of biological role, key enzyme in triglyceride metabolism. Catalyzes the hydrolysis of triglycerides from circulating chylomicrons and very low density lipoproteins (VLDL), and thereby plays an important role in lipid clearance from the blood stream, lipid utilization and storage. Although it has both phospholipase and triglyceride lipase activities it is primarily a triglyceride lipase with low but detectable phospholipase activity. Mediates margination of triglyceride-rich lipoprotein particles in capillaries. Recruited to its site of action on the luminal surface of vascular endothelium by binding to GPIHBP1 and cell surface heparan sulfate proteoglycans. The protein is Lipoprotein lipase (LPL) of Bos taurus (Bovine).